The primary structure comprises 435 residues: Adenylosuccinate synthetase (435 aa).

GTP-binding positions include 12–18 (GDEGKGK) and 40–42 (GHT). Residue D13 is the Proton acceptor of the active site. Residues D13 and G40 each coordinate Mg(2+). Residues 13-16 (DEGK), 38-41 (NAGH), T130, R144, Q224, T239, and R301 each bind IMP. Residue H41 is the Proton donor of the active site. Residue 297–303 (TVSNRKR) coordinates substrate. Residues R303, 329-331 (KLD), and 411-413 (SAG) contribute to the GTP site.

It belongs to the adenylosuccinate synthetase family. Homodimer. Requires Mg(2+) as cofactor.

Its subcellular location is the cytoplasm. The enzyme catalyses IMP + L-aspartate + GTP = N(6)-(1,2-dicarboxyethyl)-AMP + GDP + phosphate + 2 H(+). It functions in the pathway purine metabolism; AMP biosynthesis via de novo pathway; AMP from IMP: step 1/2. Its function is as follows. Plays an important role in the de novo pathway of purine nucleotide biosynthesis. Catalyzes the first committed step in the biosynthesis of AMP from IMP. In Wolbachia sp. subsp. Brugia malayi (strain TRS), this protein is Adenylosuccinate synthetase.